A 348-amino-acid polypeptide reads, in one-letter code: Dihydroorotase (348 aa).

His-17 and His-19 together coordinate Zn(2+). Residues 19-21 (HLR) and Asn-45 each bind substrate. Zn(2+) contacts are provided by Lys-103, His-140, and His-178. Lys-103 bears the N6-carboxylysine mark. His-140 contacts substrate. Substrate is bound at residue Leu-223. Asp-251 provides a ligand contact to Zn(2+). Asp-251 is a catalytic residue. Residues His-255 and Ala-267 each contribute to the substrate site.

The protein belongs to the metallo-dependent hydrolases superfamily. DHOase family. Class II DHOase subfamily. As to quaternary structure, homodimer. Zn(2+) serves as cofactor.

It carries out the reaction (S)-dihydroorotate + H2O = N-carbamoyl-L-aspartate + H(+). Its pathway is pyrimidine metabolism; UMP biosynthesis via de novo pathway; (S)-dihydroorotate from bicarbonate: step 3/3. Catalyzes the reversible cyclization of carbamoyl aspartate to dihydroorotate. This chain is Dihydroorotase, found in Escherichia coli (strain SMS-3-5 / SECEC).